Reading from the N-terminus, the 670-residue chain is MLKIPLQLSSQDGIWPARFARRLHHHHQLAYHHHKQEQQQQQQQQQQQQAKQKQKQNGVQQGRSPTFMPVMLLLLMATLLTRPLSAFSNRLSDTKLHEIYLDDKEIKLSWMVDWYKQEVLFHLQNAFNEQHRWFYLGFSKRGGLADADICFFENQNGFFNAVTDTYTSPDGQWVRRDYQQDCEVFKMDEFTLAFRRKFDTCDPLDLRLHEGTMYVVWARGETELALEDHQFALPNVTAPHEAGVKMLQLLRADKILIPETELDHMEITLQEAPIPSQETTYWCHVQRLEGNLRRRHHIVQFEPLIRTPGIVHHMEVFHCEAGEHEEIPLYNGDCEQLPPRAKICSKVMVLWAMGAGTFTYPPEAGLPIGGPGFNPYVRLEVHFNNPEKQSGLVDNSGFRIKMSKTLRQYDAAVMELGLEYTDKMAIPPGQTAFPLSGYCVADCTRAALPATGIIIFGSQLHTHLRGVRVLTRHFRGEQELREVNRDDYYSNHFQEMRTLHYKPRVLPGDALVTTCYYNTKDDKTAALGGFSISDEMCVNYIHYYPATKLEVCKSSVSEETLENYFIYMKRTEHQHGVHLNGARSSNYRSIEWTQPRIDQLYTMYMQEPLSMQCNRSDGTRFEGRSSWEGVAATPVQIRIPIHRKLCPNYNPLWLKPLEKGDCDLLGECIY.

The span at 26–35 (HHQLAYHHHK) shows a compositional bias: basic residues. The disordered stretch occupies residues 26-63 (HHQLAYHHHKQEQQQQQQQQQQQQAKQKQKQNGVQQGR). The span at 38–61 (QQQQQQQQQQQQAKQKQKQNGVQQ) shows a compositional bias: low complexity. The chain crosses the membrane as a helical span at residues 65 to 81 (PTFMPVMLLLLMATLLT). The 117-residue stretch at 104–220 (KEIKLSWMVD…GTMYVVWARG (117 aa)) folds into the DOMON domain. N-linked (GlcNAc...) asparagine glycosylation occurs at N235. Residue Y281 is part of the active site. Cystine bridges form between C283-C334 and C319-C344. Cu(2+) is bound by residues H312 and H313. 4 residues coordinate Cu(2+): H382, H461, H463, and M536. Disulfide bonds link C439–C552, C443–C613, and C515–C537. The active site involves H461. The N-linked (GlcNAc...) asparagine glycan is linked to N614.

Belongs to the copper type II ascorbate-dependent monooxygenase family. Is most likely a monomer under physiological conditions, although under conditions of high pH and low ionic strength the dimeric form predominates. Both forms are equally active. It depends on Cu(2+) as a cofactor. Present in head and in neurons innervating the oviduct (at protein level).

It localises to the membrane. The enzyme catalyses tyramine + L-ascorbate + O2 = (R)-octopamine + L-dehydroascorbate + H2O. In terms of biological role, catalyzes the hydroxylation of tyramine into octopamine, a neurotransmitter involved in ovulation and locomotion. Functions in an amine-mediated Bacc-dependent signaling pathway that negatively regulates acute ethanol sensitivity. Involved in facilitation of nociceptive escape behavior in response to potentially damaging stimuli, such as high temperatures. The protein is Tyramine beta-hydroxylase (Tbh) of Drosophila melanogaster (Fruit fly).